We begin with the raw amino-acid sequence, 110 residues long: uncharacterized protein (110 aa).

This is an uncharacterized protein from Microplitis demolitor bracovirus (isolate Webb) (MdBV).